A 1375-amino-acid polypeptide reads, in one-letter code: Patatin-like phospholipase domain-containing protein 6 (1375 aa).

Positions 1-20 (MEAPLQTGMMGTSSHGLATN) are disordered. Topologically, residues 1–59 (MEAPLQTGMMGTSSHGLATNSSGAKVAERDGFQDVLAPGEGSAGRICGAQPVPFVPQVL) are lumenal. A compositionally biased stretch (polar residues) spans 9 to 20 (MMGTSSHGLATN). The N-linked (GlcNAc...) asparagine glycan is linked to Asn-20. A helical transmembrane segment spans residues 60–80 (GVMIGAGVAVVVTAVLILLVV). Residues 81–1375 (RRLRVPKTPA…QEPPGSATDA (1295 aa)) lie on the Cytoplasmic side of the membrane. 195 to 322 (VLGHFEKPLF…VRVVQIIMVR (128 aa)) is a binding site for a nucleoside 3',5'-cyclic phosphate. 2 disordered regions span residues 352 to 436 (FPSP…RSDF) and 449 to 472 (LQEE…PREQ). Phosphoserine is present on Ser-354. Polar residues predominate over residues 359-376 (TRTSPVRGSKRMVSTSAT). Thr-361 carries the phosphothreonine modification. Ser-362 and Ser-372 each carry phosphoserine. Positions 384-398 (GRPPDPTGAPLPGPT) are enriched in pro residues. The residue at position 420 (Ser-420) is a Phosphoserine. At Thr-464 the chain carries Phosphothreonine. A nucleoside 3',5'-cyclic phosphate-binding positions include 511–633 (ELAK…VAAR) and 629–749 (TVAA…LSQK). Positions 981–1147 (LVLGGGGARG…INNLPADIAR (167 aa)) constitute a PNPLA domain. The GXGXXG signature appears at 985 to 990 (GGGARG). Residues 1012–1016 (GTSIG) carry the GXSXG motif. Ser-1014 functions as the Nucleophile in the catalytic mechanism. Catalysis depends on Asp-1134, which acts as the Proton acceptor. Residues 1134 to 1136 (DGG) carry the DGA/G motif. The disordered stretch occupies residues 1306–1375 (SYVSDGCADG…QEPPGSATDA (70 aa)). A compositionally biased stretch (acidic residues) spans 1313 to 1329 (ADGEESDCLTEYEEDAG).

Belongs to the NTE family. Glycosylated. Expressed in brain, placenta, kidney, neuron and skeletal muscle. Expressed in the developing eye, pituitary and brain.

The protein resides in the endoplasmic reticulum membrane. The catalysed reaction is a 1-acyl-sn-glycero-3-phosphocholine + H2O = sn-glycerol 3-phosphocholine + a fatty acid + H(+). It catalyses the reaction 1-(9Z-octadecenoyl)-sn-glycero-3-phosphocholine + H2O = sn-glycerol 3-phosphocholine + (9Z)-octadecenoate + H(+). The enzyme catalyses 1-hexadecanoylglycerol + H2O = glycerol + hexadecanoate + H(+). It carries out the reaction 2-hexadecanoylglycerol + H2O = glycerol + hexadecanoate + H(+). The catalysed reaction is 1-(9Z-octadecenoyl)-glycerol + H2O = glycerol + (9Z)-octadecenoate + H(+). It catalyses the reaction 2-(9Z-octadecenoyl)-glycerol + H2O = glycerol + (9Z)-octadecenoate + H(+). The enzyme catalyses 2-(5Z,8Z,11Z,14Z-eicosatetraenoyl)-glycerol + H2O = glycerol + (5Z,8Z,11Z,14Z)-eicosatetraenoate + H(+). It carries out the reaction 1-hexadecanoyl-sn-glycero-3-phosphate + H2O = sn-glycerol 3-phosphate + hexadecanoate + H(+). The catalysed reaction is 1-hexadecanoyl-sn-glycero-3-phosphocholine + H2O = sn-glycerol 3-phosphocholine + hexadecanoate + H(+). Inhibited by a series a OPs such as mipafox (MPX), phenyl saligenin phosphate (PSP), phenyl dipentyl phosphinate (PDPP), diisopropyl fluorophosphate and paraoxon. Its function is as follows. Phospholipase B that deacylates intracellular phosphatidylcholine (PtdCho), generating glycerophosphocholine (GroPtdCho). This deacylation occurs at both sn-2 and sn-1 positions of PtdCho. Catalyzes the hydrolysis of several naturally occurring membrane-associated lipids. Hydrolyzes lysophospholipids and monoacylglycerols, preferring the 1-acyl to the 2-acyl isomer. Does not catalyze hydrolysis of di- or triacylglycerols or fatty acid amides. This is Patatin-like phospholipase domain-containing protein 6 from Homo sapiens (Human).